Reading from the N-terminus, the 108-residue chain is UPF0060 membrane protein SH0717 (108 aa).

4 consecutive transmembrane segments (helical) span residues 5–25, 31–51, 60–80, and 86–106; these read IFIF…IWLW, SSWL…IATF, VYAA…YIVD, and KYDL…ILPS.

It belongs to the UPF0060 family.

Its subcellular location is the cell membrane. The sequence is that of UPF0060 membrane protein SH0717 from Staphylococcus haemolyticus (strain JCSC1435).